The chain runs to 843 residues: Lon protease (843 aa).

Basic and acidic residues predominate over residues 1–16 (MRERKETAMSDKEKKG). A disordered region spans residues 1–22 (MRERKETAMSDKEKKGAGAGAQ). One can recognise a Lon N-terminal domain in the interval 42–236 (LPILPLRNSV…LVLELLNRKR (195 aa)). 388–395 (GPPGVGKT) is an ATP binding site. The Lon proteolytic domain maps to 627 to 808 (TEIAGVATGL…DEVLQAALEE (182 aa)). Catalysis depends on residues S714 and K757. The tract at residues 805 to 843 (ALEENPVGRKPPAAPEPEGEKKPGATPTPPAKKPDEIRV) is disordered.

The protein belongs to the peptidase S16 family. As to quaternary structure, homohexamer. Organized in a ring with a central cavity.

Its subcellular location is the cytoplasm. The enzyme catalyses Hydrolysis of proteins in presence of ATP.. Its function is as follows. ATP-dependent serine protease that mediates the selective degradation of mutant and abnormal proteins as well as certain short-lived regulatory proteins. Required for cellular homeostasis and for survival from DNA damage and developmental changes induced by stress. Degrades polypeptides processively to yield small peptide fragments that are 5 to 10 amino acids long. Binds to DNA in a double-stranded, site-specific manner. The polypeptide is Lon protease (Anaeromyxobacter dehalogenans (strain 2CP-C)).